The sequence spans 721 residues: MLLPVFTLKLRHKISPRMVAIGRYDGTHPCLAAATQTGKVFIHNPHTRNQHVSASRVFQSPLESDVSLLSINQAVSCLTAGVLNPELGYDALLVGTQTNLLAYDVYNNSDLFYREVADGANAIVLGTLGDISSPLAIIGGNCALQGFNHEGSDLFWTVTGDNVNSLALCDFDGDGKKELLVGSEDFDIRVFKEDEIVAEMTETEIVTSLCPMYGSRFGYALSNGTVGVYDKTSRYWRIKSKNHAMSIHAFDLNSDGVNELITGWSNGKVDARSDRTGEVIFKDNFSSAIAGVVEGDYRMDGHIQLICCSVDGEIRGYLPGTAEMRGNLMDTSAEQDLIRELSQKKQNLLLELRNYEENAKAELASPLNEADGHRGIIPANTRLHTTLSVSLGNETQTAHTELRISTSNDTIIRAVLIFAEGIFTGESHVVHPSIHNLSSSICIPIVPPKDVPVDLHLKAFVGYRSSTQFHVFESTRQLPRFSMYALTSLDPASEPISYVNFTIAERAQRVVVWLGQNFLLPEDTHIQNAPFQVCFTSLRNGGHLHIKIKLSGEITINTDDIDLAGDIIQSMASFFAIEDLQVEADFPVYFEELRKVLVKVDEYHSVHQKLSADMADHSNLIRSLLVGAEDARLMRDMKTMKSRYMELYDLNRDLLNGYKIRCNNHTELLGNLKAVNQAIQRAGRLRVGKPKNQVITACRDAIRSNNINTLFKIMRVGTASS.

Residues 325 to 369 adopt a coiled-coil conformation; that stretch reads RGNLMDTSAEQDLIRELSQKKQNLLLELRNYEENAKAELASPLNE.

As to quaternary structure, part of BBSome complex, that contains BBS1, BBS2, BBS4, BBS5, BBS7, BBS8/TTC8, BBS9 and BBIP10. Interacts (via C-terminus) with BBS7. Interacts (via coiled coil domain) with MKKS. Interacts with CCDC28B and ALDOB. Interacts with DLEC1. Widely expressed.

It is found in the cell projection. The protein resides in the cilium membrane. It localises to the cytoplasm. Its subcellular location is the cytoskeleton. The protein localises to the microtubule organizing center. It is found in the centrosome. The protein resides in the centriolar satellite. In terms of biological role, the BBSome complex is thought to function as a coat complex required for sorting of specific membrane proteins to the primary cilia. The BBSome complex is required for ciliogenesis but is dispensable for centriolar satellite function. This ciliogenic function is mediated in part by the Rab8 GDP/GTP exchange factor, which localizes to the basal body and contacts the BBSome. Rab8(GTP) enters the primary cilium and promotes extension of the ciliary membrane. Firstly the BBSome associates with the ciliary membrane and binds to RAB3IP/Rabin8, the guanosyl exchange factor (GEF) for Rab8 and then the Rab8-GTP localizes to the cilium and promotes docking and fusion of carrier vesicles to the base of the ciliary membrane. The BBSome complex, together with the LTZL1, controls SMO ciliary trafficking and contributes to the sonic hedgehog (SHH) pathway regulation. Required for proper BBSome complex assembly and its ciliary localization. In Homo sapiens (Human), this protein is BBSome complex member BBS2.